The sequence spans 751 residues: 1,3-beta-galactosyl-N-acetylhexosamine phosphorylase (751 aa).

Residue Asp-313 is the Proton donor of the active site.

Belongs to the glycoside hydrolase 112 family. As to quaternary structure, homodimer.

It catalyses the reaction beta-D-galactosyl-(1-&gt;3)-N-acetyl-D-glucosamine + phosphate = alpha-D-galactose 1-phosphate + N-acetyl-D-glucosamine. Reversibly phosphorolyzes lacto-N-biose to Gal1-P and N-acetylglucosamine (GlcNAc) and galacto-N-biose to Gal1-P and N-acetylgalactosamine (GalNAc). Involved in the lacto-N-biose I/galacto-N-biose (LNB/GNB) degradation pathway, which is important for host intestinal colonization by bifidobacteria. This chain is 1,3-beta-galactosyl-N-acetylhexosamine phosphorylase (lnpA), found in Bifidobacterium longum subsp. longum (strain ATCC 15707 / DSM 20219 / JCM 1217 / NCTC 11818 / E194b).